Here is a 266-residue protein sequence, read N- to C-terminus: MWYSTVRNPSIALIKQGYHILAEYNLVKEELKNIYAIPSYACGLHWFGVIFVHSGIYAGSVFRFSILLPENFPADISLPTVVFSTEVLHPHICPQNKTLDLAHFLNEWRKDEHHIWHVLRYIQAIFADPEGSICTGQSSSGDLVIMDEVRNMNALNMLAKSRPEYIKRVQEQAILSRNLIYDRPPTEDPHYIIVEPYCAERHLKFMDQLKSPCWKEATSMDCSQPSEYLGHIDSSRQLDEEEANQVEKLHRGRIPEHQREESEVSL.

One can recognise a UBC core domain in the interval 15 to 178 (KQGYHILAEY…VQEQAILSRN (164 aa)). A disordered region spans residues 234–266 (SSRQLDEEEANQVEKLHRGRIPEHQREESEVSL). Over residues 245 to 266 (QVEKLHRGRIPEHQREESEVSL) the composition is skewed to basic and acidic residues.

Belongs to the ubiquitin-conjugating enzyme family. FTS subfamily.

The chain is Protein crossbronx-like from Drosophila melanogaster (Fruit fly).